The primary structure comprises 348 residues: Isopentenyl-diphosphate delta-isomerase (348 aa).

9-10 lines the substrate pocket; the sequence is RK. FMN contacts are provided by residues 68–70, S98, and N127; that span reads AMT. Q157 contributes to the substrate binding site. Position 158 (E158) interacts with Mg(2+). Residues K188, S213, T218, and 286–287 contribute to the FMN site; that span reads AG.

This sequence belongs to the IPP isomerase type 2 family. Homooctamer. Dimer of tetramers. The cofactor is FMN. NADPH serves as cofactor. It depends on Mg(2+) as a cofactor.

It localises to the cytoplasm. The enzyme catalyses isopentenyl diphosphate = dimethylallyl diphosphate. In terms of biological role, involved in the biosynthesis of isoprenoids. Catalyzes the 1,3-allylic rearrangement of the homoallylic substrate isopentenyl (IPP) to its allylic isomer, dimethylallyl diphosphate (DMAPP). This is Isopentenyl-diphosphate delta-isomerase from Limosilactobacillus reuteri (strain DSM 20016) (Lactobacillus reuteri).